Here is a 557-residue protein sequence, read N- to C-terminus: Glypican-1 (557 aa).

Positions 1-23 (MELRTRGWWLLCAAAALVVCARG) are cleaved as a signal peptide. 7 disulfides stabilise this stretch: cysteine 32–cysteine 68, cysteine 62–cysteine 255, cysteine 69–cysteine 258, cysteine 190–cysteine 342, cysteine 245–cysteine 278, cysteine 267–cysteine 414, and cysteine 271–cysteine 400. N-linked (GlcNAc...) asparagine glycans are attached at residues asparagine 79 and asparagine 116. The disordered stretch occupies residues 477–531 (FQDASDDGSGSGSGGGCPDDTCGRRVSKKSSSSRTPLTHALPGLSEQEGQKTSAA). O-linked (Xyl...) (heparan sulfate) serine glycans are attached at residues serine 485, serine 487, and serine 489. Serine 529 carries the GPI-anchor amidated serine lipid modification. Positions 530 to 557 (AATCPEPHSFFLLFLVTLVLAAARPRWR) are cleaved as a propeptide — removed in mature form.

It belongs to the glypican family. Post-translationally, S-nitrosylated in a Cu(2+)-dependent manner. Nitric acid (NO) is released from the nitrosylated cysteines by ascorbate or by some other reducing agent, in a Cu(2+) or Zn(2+) dependent manner. This free nitric oxide is then capable of cleaving the heparan sulfate side chains. In terms of processing, N- and O-glycosylated. N-glycosylation is mainly of the complex type containing sialic acid. O-glycosylated with heparan sulfate. The heparan sulfate chains can be cleaved either by the action of heparanase or, degraded by a deaminative process that uses nitric oxide (NO) released from the S-nitrosylated cysteines. This process is triggered by ascorbate, or by some other reducing agent, in a Cu(2+)- or Zn(2+) dependent manner. Cu(2+) ions are provided by ceruloproteins such as APP, PRNP or CP which associate with GCP1 in intracellular compartments or lipid rafts. This cell-associated glypican is further processed to give rise to a medium-released species.

It localises to the cell membrane. The protein resides in the endosome. Its subcellular location is the secreted. It is found in the extracellular space. In terms of biological role, cell surface proteoglycan that bears heparan sulfate. Binds, via the heparan sulfate side chains, alpha-4 (V) collagen and participates in Schwann cell myelination. May act as a catalyst in increasing the rate of conversion of prion protein PRPN(C) to PRNP(Sc) via associating (via the heparan sulfate side chains) with both forms of PRPN, targeting them to lipid rafts and facilitating their interaction. Required for proper skeletal muscle differentiation by sequestering FGF2 in lipid rafts preventing its binding to receptors (FGFRs) and inhibiting the FGF-mediated signaling. Binds Cu(2+) or Zn(2+) ions. The sequence is that of Glypican-1 (Gpc1) from Mus musculus (Mouse).